We begin with the raw amino-acid sequence, 436 residues long: 3-ketoacyl-CoA thiolase (436 aa).

The Acyl-thioester intermediate role is filled by C99. Catalysis depends on proton acceptor residues H392 and C422.

The protein belongs to the thiolase-like superfamily. Thiolase family. As to quaternary structure, heterotetramer of two alpha chains (FadJ) and two beta chains (FadI).

Its subcellular location is the cytoplasm. It carries out the reaction an acyl-CoA + acetyl-CoA = a 3-oxoacyl-CoA + CoA. The protein operates within lipid metabolism; fatty acid beta-oxidation. Catalyzes the final step of fatty acid oxidation in which acetyl-CoA is released and the CoA ester of a fatty acid two carbons shorter is formed. The sequence is that of 3-ketoacyl-CoA thiolase from Shewanella sp. (strain ANA-3).